Here is a 319-residue protein sequence, read N- to C-terminus: Putrescine hydroxycinnamoyltransferase 2 (319 aa).

Catalysis depends on proton acceptor residues His-160 and Asp-301.

Belongs to the plant acyltransferase family.

Functionally, hydroxycinnamoyl transferase that catalyzes the transfer of an acyl from p-coumaryol-CoA to putrescine, to produce coumaroyl putrescine. This chain is Putrescine hydroxycinnamoyltransferase 2, found in Oryza sativa subsp. japonica (Rice).